The sequence spans 221 residues: Serine/arginine-rich splicing factor 9 (221 aa).

2 RRM domains span residues 14–89 (GRIY…FPRA) and 111–187 (FRVL…PERG). Residue lysine 36 forms a Glycyl lysine isopeptide (Lys-Gly) (interchain with G-Cter in SUMO2) linkage. The span at 187-198 (GTSYGCSRSRSG) shows a compositional bias: low complexity. The interval 187 to 221 (GTSYGCSRSRSGSRGRDSPYQSRGSPHYFSPFRPY) is disordered. The interaction with SAFB1 stretch occupies residues 188–200 (TSYGCSRSRSGSR). Serine 189, serine 193, serine 195, serine 204, serine 208, and serine 211 each carry phosphoserine. At tyrosine 214 the chain carries Phosphotyrosine. At serine 216 the chain carries Phosphoserine.

This sequence belongs to the splicing factor SR family. As to quaternary structure, interacts with KHDRBS3. Interacts with HABP4. Interacts with NOL3/ARC/NOP30. Interacts with NSEP1/YB-1/YB1. Interacts with SAFB/SAFB1. Interacts with SRSF6/SFRS6. Interacts with TRA2B/SFRS10. Interacts with C1QBP. May also interact with DUSP11/PIR1. In terms of processing, extensively phosphorylated on serine residues in the RS domain.

The protein localises to the nucleus. Its function is as follows. Plays a role in constitutive splicing and can modulate the selection of alternative splice sites. Represses the splicing of MAPT/Tau exon 10. This Rattus norvegicus (Rat) protein is Serine/arginine-rich splicing factor 9 (Srsf9).